Consider the following 165-residue polypeptide: uncharacterized protein (165 aa).

The helical transmembrane segment at alanine 16–valine 36 threads the bilayer.

The protein belongs to the asfivirus F165R family.

The protein resides in the host membrane. This is an uncharacterized protein from African swine fever virus (strain Badajoz 1971 Vero-adapted) (Ba71V).